A 715-amino-acid polypeptide reads, in one-letter code: MKSKSKTVPDVATLTKAKAKVELMRLALEIERHDKAYYQEDAPKVSDADYDALRRRLEEIEHKFPELVSGASPSQKVGAAPARGFAKVQHAVPMLSLGNAFSDDEVAEFLQRVRRFLNLGDEIPAIVAEPKIDGLSLSLRYEQGELVRAATRGDGSVGEDVTANVRTLKDIPHTLKGNRIPAACELRGEVYMLKSDFLALNKKQEEAGEAPFANPRNSAAGSLRQKDVAITASRPLKFFAYAWGEFSGETPERTQHDMLGWLDHAGFVVNPEITLCHSVDDALVFYRRIGEERAALPYDIDGVVYKVDRLDWQARLGFAGRAPRWAIAHKFAAEQATTILEKIEIQVGRTGALTPVARLAPVTVGGVVVQNATLHNEDYIKGVGNDGQPLREGRDIRVGDTVIIQRAGDVIPQVVDVVLDKRPADAVPYEFPQACPVCGSHAVREDGEVVRRCTGALICPAQAVERLKHFVSRLAFDIDGLGEKQIELFHERGWVKEPVDIFTLKTRNATLKLEELEGYGETSVRNLFAAIDARRTIELHRLIFALGIRHVGEGNAKLLARHYGTIDAFLGAMRAAAAGQTEEGNTSEAYQDLDNIGGIGDIVAEAVVEFFAEERNVEALDALLGELDEVLPAAQVKRDSAVAGKTVVFTGSLSKFTRDEAKAAAERLGAKVAGSVSKKTDFVVAGEDAGSKLTKARELGVSVLSEDEWLALIQG.

NAD(+)-binding positions include 47 to 51 (DADYD), 96 to 97 (SL), and Glu-129. Lys-131 acts as the N6-AMP-lysine intermediate in catalysis. Residues Arg-152, Glu-189, Lys-306, and Lys-330 each coordinate NAD(+). The Zn(2+) site is built by Cys-435, Cys-438, Cys-453, and Cys-459. In terms of domain architecture, BRCT spans 637 to 715 (KRDSAVAGKT…EDEWLALIQG (79 aa)).

This sequence belongs to the NAD-dependent DNA ligase family. LigA subfamily. Requires Mg(2+) as cofactor. Mn(2+) serves as cofactor.

The catalysed reaction is NAD(+) + (deoxyribonucleotide)n-3'-hydroxyl + 5'-phospho-(deoxyribonucleotide)m = (deoxyribonucleotide)n+m + AMP + beta-nicotinamide D-nucleotide.. In terms of biological role, DNA ligase that catalyzes the formation of phosphodiester linkages between 5'-phosphoryl and 3'-hydroxyl groups in double-stranded DNA using NAD as a coenzyme and as the energy source for the reaction. It is essential for DNA replication and repair of damaged DNA. The sequence is that of DNA ligase from Rhodopseudomonas palustris (strain BisA53).